The following is a 204-amino-acid chain: ATP synthase subunit 4, mitochondrial (204 aa).

2 helical membrane passes run 27 to 47 (GILATTAAASVYAISSELYVV) and 52 to 72 (ILLVTFLGFIALISKTVAPLY).

F-type ATP synthases have 2 components, the catalytic core F(1) and the membrane-embedded component F(0), linked together by a central stalk and a peripheral stalk. The central stalk, also called rotor shaft, is often seen as part of F(1). The peripheral stalk is seen as part of F(0). F(0) contains the membrane channel next to the rotor. F-type ATP synthases form dimers but each monomer functions independently in ATP generation. The dimer consists of 18 different polypeptides: ATP1 (subunit alpha, part of F(1), 3 molecules per monomer), ATP2 (subunit beta, part of F(1), 3 molecules per monomer), ATP3 (subunit gamma, part of the central stalk), ATP4 (subunit b, part of the peripheral stalk), ATP5/OSCP (subunit 5/OSCP, part of the peripheral stalk), ATP6 (subunit a, part of the peripheral stalk), ATP7 (subunit d, part of the peripheral stalk), ATP8 (subunit 8, part of the peripheral stalk), OLI1 (subunit c, part of the rotor, 10 molecules per monomer), ATP14 (subunit h, part of the peripheral stalk), ATP15 (subunit epsilon, part of the central stalk), ATP16 (subunit delta, part of the central stalk), ATP17 (subunit f, part of the peripheral stalk), ATP18 (subunit i/j, part of the peripheral stalk). Dimer-specific subunits are ATP19 (subunit k, at interface between monomers), ATP20 (subunit g, at interface between monomers), TIM11 (subunit e, at interface between monomers). Also contains subunit L.

It localises to the mitochondrion inner membrane. Its function is as follows. Mitochondrial membrane ATP synthase (F(1)F(0) ATP synthase or Complex V) produces ATP from ADP in the presence of a proton gradient across the membrane which is generated by electron transport complexes of the respiratory chain. F-type ATP synthases consist of two structural domains, F(1) - containing the extramembraneous catalytic core, and F(0) - containing the membrane proton channel, linked together by a central stalk and a peripheral stalk. During catalysis, ATP synthesis in the catalytic domain of F(1) is coupled via a rotary mechanism of the central stalk subunits to proton translocation. Part of the complex F(0) domain and the peripheral stalk, which acts as a stator to hold the catalytic alpha/ATP1(3)beta/ATP2(3) subcomplex and subunit a/ATP6 static relative to the rotary elements. The protein is ATP synthase subunit 4, mitochondrial of Pichia angusta (Yeast).